Consider the following 261-residue polypeptide: Pantothenate synthetase (261 aa).

29–36 (MGALHNGH) is an ATP binding site. His36 acts as the Proton donor in catalysis. Gln60 provides a ligand contact to (R)-pantoate. Gln60 lines the beta-alanine pocket. An ATP-binding site is contributed by 147-150 (GEKD). A (R)-pantoate-binding site is contributed by Gln153. 184-187 (LSSR) serves as a coordination point for ATP.

Belongs to the pantothenate synthetase family. Homodimer.

It is found in the cytoplasm. The enzyme catalyses (R)-pantoate + beta-alanine + ATP = (R)-pantothenate + AMP + diphosphate + H(+). It functions in the pathway cofactor biosynthesis; (R)-pantothenate biosynthesis; (R)-pantothenate from (R)-pantoate and beta-alanine: step 1/1. Catalyzes the condensation of pantoate with beta-alanine in an ATP-dependent reaction via a pantoyl-adenylate intermediate. The polypeptide is Pantothenate synthetase (Francisella tularensis subsp. tularensis (strain FSC 198)).